Here is a 357-residue protein sequence, read N- to C-terminus: 3-isopropylmalate dehydrogenase (357 aa).

Residue 76-89 participates in NAD(+) binding; that stretch reads GPQWDTIDPSLRPE. Substrate is bound by residues Arg-96, Arg-106, Arg-134, and Asp-224. Mg(2+) is bound by residues Asp-224, Asp-248, and Asp-252. 282–294 is a binding site for NAD(+); that stretch reads GSAPDIAGKGIAN.

It belongs to the isocitrate and isopropylmalate dehydrogenases family. LeuB type 1 subfamily. Homodimer. Requires Mg(2+) as cofactor. It depends on Mn(2+) as a cofactor.

It localises to the cytoplasm. It catalyses the reaction (2R,3S)-3-isopropylmalate + NAD(+) = 4-methyl-2-oxopentanoate + CO2 + NADH. It participates in amino-acid biosynthesis; L-leucine biosynthesis; L-leucine from 3-methyl-2-oxobutanoate: step 3/4. Its function is as follows. Catalyzes the oxidation of 3-carboxy-2-hydroxy-4-methylpentanoate (3-isopropylmalate) to 3-carboxy-4-methyl-2-oxopentanoate. The product decarboxylates to 4-methyl-2 oxopentanoate. The protein is 3-isopropylmalate dehydrogenase of Xanthomonas oryzae pv. oryzae (strain MAFF 311018).